The sequence spans 284 residues: HTH-type transcriptional activator RhaR (284 aa).

In terms of domain architecture, HTH araC/xylS-type spans 181–279; that stretch reads DMLMNALRAS…GVSPSAYRQR (99 aa). 2 DNA-binding regions (H-T-H motif) span residues 198 to 219 and 246 to 269; these read EAFC…KEQT and IGDV…HQAF.

As to quaternary structure, binds DNA as a dimer.

It localises to the cytoplasm. In terms of biological role, activates expression of the rhaSR operon in response to L-rhamnose. The sequence is that of HTH-type transcriptional activator RhaR from Pectobacterium atrosepticum (strain SCRI 1043 / ATCC BAA-672) (Erwinia carotovora subsp. atroseptica).